The following is a 548-amino-acid chain: Chaperonin GroEL 1 (548 aa).

Residues 30 to 33, Lys51, 87 to 91, Gly415, 479 to 481, and Asp495 each bind ATP; these read TLGP, DGTTT, and NAA.

This sequence belongs to the chaperonin (HSP60) family. As to quaternary structure, forms a cylinder of 14 subunits composed of two heptameric rings stacked back-to-back. Interacts with the co-chaperonin GroES.

Its subcellular location is the cytoplasm. It catalyses the reaction ATP + H2O + a folded polypeptide = ADP + phosphate + an unfolded polypeptide.. Together with its co-chaperonin GroES, plays an essential role in assisting protein folding. The GroEL-GroES system forms a nano-cage that allows encapsulation of the non-native substrate proteins and provides a physical environment optimized to promote and accelerate protein folding. In Escherichia coli O1:K1 / APEC, this protein is Chaperonin GroEL 1.